Reading from the N-terminus, the 377-residue chain is Cytochrome c peroxidase, mitochondrial (377 aa).

Residues methionine 1–phenylalanine 32 constitute a mitochondrion transit peptide. Residue histidine 138 is the Proton acceptor of the active site. Histidine 261 is a binding site for heme b. Catalysis depends on tryptophan 277, which acts as the Tryptophan radical intermediate.

It belongs to the peroxidase family. Cytochrome c peroxidase subfamily. In terms of assembly, forms a one-to-one complex with cytochrome c. Interacts with MID1 (via C-terminus); the interaction may contribute to cellular detoxification of radicals. Requires heme b as cofactor.

The protein localises to the mitochondrion matrix. Its subcellular location is the mitochondrion intermembrane space. It catalyses the reaction 2 Fe(II)-[cytochrome c] + H2O2 + 2 H(+) = 2 Fe(III)-[cytochrome c] + 2 H2O. In terms of biological role, destroys radicals which are normally produced within the cells and which are toxic to biological systems. This chain is Cytochrome c peroxidase, mitochondrial (CCP1), found in Cryptococcus neoformans var. grubii serotype A (strain H99 / ATCC 208821 / CBS 10515 / FGSC 9487) (Filobasidiella neoformans var. grubii).